Consider the following 414-residue polypeptide: N-carbamoyl-L-amino-acid amidohydrolase (414 aa).

A divalent metal cation-binding residues include histidine 83, aspartate 94, glutamate 129, and histidine 195. Residues glutamine 198, histidine 231, asparagine 281, arginine 294, and glycine 363 each contribute to the an N-carbamoyl-L-alpha-amino acid site. The interval 214-333 (GIAGPSWFKV…QIEKNMAAVP (120 aa)) is involved in dimerization. Histidine 388 serves as a coordination point for a divalent metal cation.

This sequence belongs to the peptidase M20 family. In terms of assembly, homodimer. The cofactor is Mn(2+). Ni(2+) serves as cofactor. Requires Co(2+) as cofactor. It depends on Fe(2+) as a cofactor.

The enzyme catalyses an N-carbamoyl-L-alpha-amino acid + H2O + 2 H(+) = an L-alpha-amino acid + NH4(+) + CO2. It catalyses the reaction N-carbamoyl-L-methionine + H2O + 2 H(+) = L-methionine + NH4(+) + CO2. Catalyzes the hydrolysis of N-carbamoyl-L-alpha-amino acids to free L-alpha-amino acids. Is strictly L-specific since it is inactive toward N-carbamoyl-D-alpha-amino acids. The protein is N-carbamoyl-L-amino-acid amidohydrolase of Pseudomonas sp. (strain NS671).